The chain runs to 345 residues: MKVAIIGATGYGGIELIRLLEQHPYFSIASLHSFSQVGECITNVYPHFQNVLVHTLQEIDAEEIVKEAEIVFLATPAGVSAELTPKLLAVGLKVIDLSGDFRMKDPFIYEQWYKRAAAKEEILSKAVYGLSEWKRSEVQNANLIANPGCFATAALLATLPLVRSGIIEEDSIIIDAKSGVSGAGKTPTTMTHFPELYDNLRIYKVNEHQHVPEIEQMLAEWNRETKPITFSTHLIPISRGIMVTLYAKVKREMEIEQLQKLYEETYEQSPFIRIRLQGEFPSPKEVRGSNYCDMGIAYDERTGRVTVVSVIDNMMKGAAGQAIQNANIIAGLEETTGLQHMPLYL.

Residue Cys-149 is part of the active site.

Belongs to the NAGSA dehydrogenase family. Type 1 subfamily.

Its subcellular location is the cytoplasm. The enzyme catalyses N-acetyl-L-glutamate 5-semialdehyde + phosphate + NADP(+) = N-acetyl-L-glutamyl 5-phosphate + NADPH + H(+). It participates in amino-acid biosynthesis; L-arginine biosynthesis; N(2)-acetyl-L-ornithine from L-glutamate: step 3/4. Its function is as follows. Catalyzes the NADPH-dependent reduction of N-acetyl-5-glutamyl phosphate to yield N-acetyl-L-glutamate 5-semialdehyde. The protein is N-acetyl-gamma-glutamyl-phosphate reductase of Bacillus cereus (strain AH187).